A 404-amino-acid chain; its full sequence is CCA-adding enzyme (404 aa).

Positions 27 and 30 each coordinate ATP. CTP-binding residues include G27 and R30. D40 and D42 together coordinate Mg(2+). The ATP site is built by R111, D154, R157, R160, and R163. CTP is bound by residues R111, D154, R157, R160, and R163.

Belongs to the tRNA nucleotidyltransferase/poly(A) polymerase family. Bacterial CCA-adding enzyme type 3 subfamily. As to quaternary structure, homodimer. The cofactor is Mg(2+).

It carries out the reaction a tRNA precursor + 2 CTP + ATP = a tRNA with a 3' CCA end + 3 diphosphate. It catalyses the reaction a tRNA with a 3' CCA end + 2 CTP + ATP = a tRNA with a 3' CCACCA end + 3 diphosphate. In terms of biological role, catalyzes the addition and repair of the essential 3'-terminal CCA sequence in tRNAs without using a nucleic acid template. Adds these three nucleotides in the order of C, C, and A to the tRNA nucleotide-73, using CTP and ATP as substrates and producing inorganic pyrophosphate. tRNA 3'-terminal CCA addition is required both for tRNA processing and repair. Also involved in tRNA surveillance by mediating tandem CCA addition to generate a CCACCA at the 3' terminus of unstable tRNAs. While stable tRNAs receive only 3'-terminal CCA, unstable tRNAs are marked with CCACCA and rapidly degraded. This Geobacillus sp. (strain WCH70) protein is CCA-adding enzyme.